The chain runs to 313 residues: Aspartate carbamoyltransferase catalytic subunit (313 aa).

Carbamoyl phosphate contacts are provided by arginine 58 and threonine 59. Lysine 86 contacts L-aspartate. Carbamoyl phosphate contacts are provided by arginine 108, histidine 136, and glutamine 139. L-aspartate is bound by residues arginine 169 and arginine 223. Carbamoyl phosphate is bound by residues glycine 265 and proline 266.

The protein belongs to the aspartate/ornithine carbamoyltransferase superfamily. ATCase family. As to quaternary structure, heterododecamer (2C3:3R2) of six catalytic PyrB chains organized as two trimers (C3), and six regulatory PyrI chains organized as three dimers (R2).

It carries out the reaction carbamoyl phosphate + L-aspartate = N-carbamoyl-L-aspartate + phosphate + H(+). It functions in the pathway pyrimidine metabolism; UMP biosynthesis via de novo pathway; (S)-dihydroorotate from bicarbonate: step 2/3. Functionally, catalyzes the condensation of carbamoyl phosphate and aspartate to form carbamoyl aspartate and inorganic phosphate, the committed step in the de novo pyrimidine nucleotide biosynthesis pathway. This chain is Aspartate carbamoyltransferase catalytic subunit, found in Anaeromyxobacter dehalogenans (strain 2CP-C).